Consider the following 1679-residue polypeptide: [F-actin]-monooxygenase mical2b (1679 aa).

The tract at residues 2–494 (GETEEERTSQ…RHLFISGEQD (493 aa)) is monooxygenase domain. Residues cysteine 97, 97-125 (CGFRTAIELALLGAKVVVIEKRDTFSRNN), glutamate 116, arginine 118, arginine 123, asparagine 125, and aspartate 398 contribute to the FAD site. The region spanning 516 to 619 (EVRPGRLLLW…MVLYLSKFYE (104 aa)) is the Calponin-homology (CH) domain. Residues 658-679 (RKRIPKLDKKLEESDVNRKRKK) carry the Nuclear localization signal motif. Disordered stretches follow at residues 661 to 772 (IPKL…KAKW), 818 to 838 (SAYKSSERRPRSPLIPFTPTL), 874 to 907 (SSLFTGNPAQPQTDESSPAVSPSSPPQTIPESST), 1073 to 1163 (STRH…RSTA), 1194 to 1247 (KPED…DEIP), 1259 to 1283 (EYPKPSSSSPEPIVTSISSDPISFS), 1302 to 1342 (DLTN…PAPP), and 1473 to 1509 (RNKASAQQQQQQKSNSSSEDEQEPKLTHSGALQKKKE). Composition is skewed to basic and acidic residues over residues 662-674 (PKLDKKLEESDVN) and 697-707 (GEREEQKENKV). The span at 874 to 888 (SSLFTGNPAQPQTDE) shows a compositional bias: polar residues. An LIM zinc-binding domain is found at 1011–1073 (DTCVFCQKRV…KMHFSQRKTS (63 aa)). The span at 1086-1099 (IRSSSITISNHTST) shows a compositional bias: low complexity. The segment covering 1112-1123 (DSSTQQDLQTLP) has biased composition (polar residues). The span at 1133–1143 (EVKDSSKKADP) shows a compositional bias: basic and acidic residues. Residues 1144–1154 (ADSAPACPDSP) show a composition bias toward low complexity. The segment covering 1202–1211 (LAEEDGNSDF) has biased composition (acidic residues). A compositionally biased stretch (polar residues) spans 1220–1242 (SKKPSNPSTDSNCLPTKDNSSTP). The segment covering 1259–1270 (EYPKPSSSSPEP) has biased composition (low complexity). The segment covering 1302–1325 (DLTNPGKSGAEEQQQQHVKPSISL) has biased composition (polar residues). Residues 1333-1342 (THPQPEPAPP) are compositionally biased toward pro residues. The span at 1475-1489 (KASAQQQQQQKSNSS) shows a compositional bias: low complexity. The 151-residue stretch at 1517–1667 (KSDELKRLHR…EKAEDRDLES (151 aa)) folds into the bMERB domain.

Belongs to the Mical family. Requires FAD as cofactor.

The protein localises to the nucleus. It is found in the cytoplasm. The catalysed reaction is L-methionyl-[F-actin] + NADPH + O2 + H(+) = L-methionyl-(R)-S-oxide-[F-actin] + NADP(+) + H2O. In terms of biological role, nuclear monooxygenase that promotes depolymerization of F-actin by mediating oxidation of specific methionine residues on actin and regulates the srf signaling. Acts by modifying nuclear actin subunits through the addition of oxygen to form methionine-sulfoxide, leading to promote actin filament severing and prevent repolymerization. Acts as a key regulator of the srf signaling pathway elicited by nerve growth factor and serum: mediates oxidation and subsequent depolymerization of nuclear actin, leading to increase mkl1/mrtf-a presence in the nucleus and promote srf:mkl1/mrtf-a-dependent gene transcription. The polypeptide is [F-actin]-monooxygenase mical2b (Danio rerio (Zebrafish)).